A 341-amino-acid polypeptide reads, in one-letter code: Probable alcohol acetyltransferase (341 aa).

The transit peptide at 1-40 (MFASRILRNSAQTLKTELPHKETIKMAYDLHKPRSTAIRH) directs the protein to the mitochondrion. An AB hydrolase-1 domain is found at 48–301 (PILFLHGIFG…NSNHDILDQR (254 aa)). Catalysis depends on charge relay system residues serine 121, aspartate 145, and histidine 295.

This sequence belongs to the AB hydrolase superfamily.

The protein localises to the mitochondrion. In terms of biological role, probable alcohol acetyltransferase that uses acetyl-CoA to synthesize acetate esters from various alcohols. Not involved in the synthesis of ethyl acetate. The sequence is that of Probable alcohol acetyltransferase (EAT2) from Wickerhamomyces anomalus (strain ATCC 58044 / CBS 1984 / NCYC 433 / NRRL Y-366-8) (Yeast).